A 286-amino-acid chain; its full sequence is ATP synthase gamma chain (286 aa).

Belongs to the ATPase gamma chain family. In terms of assembly, F-type ATPases have 2 components, CF(1) - the catalytic core - and CF(0) - the membrane proton channel. CF(1) has five subunits: alpha(3), beta(3), gamma(1), delta(1), epsilon(1). CF(0) has three main subunits: a, b and c.

The protein localises to the cell inner membrane. Produces ATP from ADP in the presence of a proton gradient across the membrane. The gamma chain is believed to be important in regulating ATPase activity and the flow of protons through the CF(0) complex. In Shewanella sediminis (strain HAW-EB3), this protein is ATP synthase gamma chain.